Consider the following 243-residue polypeptide: Arginine transport ATP-binding protein ArtP (243 aa).

The ABC transporter domain maps to 3-242 (IRVKNLNFFY…KTEQFKHYLS (240 aa)). 35-42 (GPSGAGKS) contacts ATP.

The protein belongs to the ABC transporter superfamily. As to quaternary structure, the complex is composed of two ATP-binding proteins (ArtP), two transmembrane proteins (ArtM and ArtQ) and a solute-binding protein (ArtI).

The protein localises to the cell inner membrane. It catalyses the reaction a polar amino acid(out) + ATP + H2O = a polar amino acid(in) + ADP + phosphate + H(+). The catalysed reaction is L-arginine(out) + ATP + H2O = L-arginine(in) + ADP + phosphate + H(+). Its function is as follows. Part of the ABC transporter complex ArtPIQM involved in arginine transport. Probably responsible for energy coupling to the transport system. The sequence is that of Arginine transport ATP-binding protein ArtP (artP) from Haemophilus influenzae (strain ATCC 51907 / DSM 11121 / KW20 / Rd).